The primary structure comprises 194 residues: DPY30 domain-containing protein 2 (194 aa).

Positions 126-172 are disordered; it reads EAFEKEPLKQESLPGTSDMIPGMPQQSPSSEPSVSSQVDLNTGTPQE. Residues 149 to 163 show a composition bias toward low complexity; it reads PQQSPSSEPSVSSQV.

The protein belongs to the dpy-30 family.

This Bos taurus (Bovine) protein is DPY30 domain-containing protein 2 (DYDC2).